A 410-amino-acid polypeptide reads, in one-letter code: Aspartic proteinase Asp1 (410 aa).

An N-terminal signal peptide occupies residues 1–23 (MTARLALLASLLLLLQLVPPSSA). The propeptide at 24 to 46 (VVLELHGNVYPIGHFFITMNIGD) is removed in mature form. Positions 38-392 (FFITMNIGDP…DSERSLLGWV (355 aa)) constitute a Peptidase A1 domain. Active-site residues include D56 and D257.

It belongs to the peptidase A1 family.

This is Aspartic proteinase Asp1 (ASP1) from Oryza sativa subsp. japonica (Rice).